Here is a 1133-residue protein sequence, read N- to C-terminus: RNA-dependent RNA polymerase 2 (1133 aa).

Positions 830, 832, and 834 each coordinate Mg(2+).

The protein belongs to the RdRP family. In terms of assembly, interacts with NRPD1 and SHH1. Associates with Pol IV complex, forming an interpolymerase channel bridging their active sites, through which the Pol IV-generated transcript is handed over to the RDR2 active site after being backtracked, where it is used as the template for double-stranded RNA (dsRNA) synthesis. Interacts with JMJ24.

It localises to the nucleus. It is found in the nucleoplasm. The protein resides in the nucleolus. It carries out the reaction RNA(n) + a ribonucleoside 5'-triphosphate = RNA(n+1) + diphosphate. In terms of biological role, RNA-dependent direct polymerase involved in the production of small interfering RNAs (siRNAs). Binds to single-stranded RNA (ssRNA); engages ssRNAs longer than 7 nucleotides and initiates internal to their 3' ends. Able to transcribe the RNA of an RNA/DNA hybrid, the transcript produced by Pol IV, if its 3' end is accessible, to generate double-stranded small interfering RNAs (dsRNAs) precursor essential for establishing and maintaining DNA methylation. Required for the biogenesis of endogenous siRNAs of 24 nucleotide which derive from heterochromatin and DNA repeats such as transposons or endogenous gene tandem repeats, such as repeats present in FWA gene. Involved in transcriptional gene silencing (TGS). Component of the RNA-directed DNA methylation (RdDM) silencing pathway that utilizes siRNAs to guide DNA methyltransferases to asymmetric cytosines. Involved in control of flowering time through RdDM of FWA locus. Required for reception of long-distance mRNA silencing in the shoot. Required for the formation of telomeric siRNAs and the RNA-dependent DNA methylation of asymmetric cytosines in telomeric (5'-CCCTAAA-3') repeats. This is RNA-dependent RNA polymerase 2 from Arabidopsis thaliana (Mouse-ear cress).